Consider the following 454-residue polypeptide: tRNA modification GTPase MnmE (454 aa).

3 residues coordinate (6S)-5-formyl-5,6,7,8-tetrahydrofolate: Arg-23, Glu-80, and Lys-120. Residues 216–377 (GMKVVIAGRP…LRNHLKQSMG (162 aa)) form the TrmE-type G domain. Asn-226 provides a ligand contact to K(+). Residues 226–231 (NAGKSS), 245–251 (TDIAGTT), 270–273 (DTAG), 335–338 (NKAD), and 358–360 (SAR) each bind GTP. Ser-230 contacts Mg(2+). K(+) is bound by residues Thr-245, Ile-247, and Thr-250. Position 251 (Thr-251) interacts with Mg(2+). Residue Lys-454 participates in (6S)-5-formyl-5,6,7,8-tetrahydrofolate binding.

This sequence belongs to the TRAFAC class TrmE-Era-EngA-EngB-Septin-like GTPase superfamily. TrmE GTPase family. Homodimer. Heterotetramer of two MnmE and two MnmG subunits. K(+) serves as cofactor.

The protein resides in the cytoplasm. Its function is as follows. Exhibits a very high intrinsic GTPase hydrolysis rate. Involved in the addition of a carboxymethylaminomethyl (cmnm) group at the wobble position (U34) of certain tRNAs, forming tRNA-cmnm(5)s(2)U34. The chain is tRNA modification GTPase MnmE from Salmonella typhimurium (strain LT2 / SGSC1412 / ATCC 700720).